A 1357-amino-acid polypeptide reads, in one-letter code: DNA-directed RNA polymerase subunit beta (1357 aa).

Belongs to the RNA polymerase beta chain family. As to quaternary structure, the RNAP catalytic core consists of 2 alpha, 1 beta, 1 beta' and 1 omega subunit. When a sigma factor is associated with the core the holoenzyme is formed, which can initiate transcription.

The enzyme catalyses RNA(n) + a ribonucleoside 5'-triphosphate = RNA(n+1) + diphosphate. Its function is as follows. DNA-dependent RNA polymerase catalyzes the transcription of DNA into RNA using the four ribonucleoside triphosphates as substrates. This Nitrosospira multiformis (strain ATCC 25196 / NCIMB 11849 / C 71) protein is DNA-directed RNA polymerase subunit beta.